We begin with the raw amino-acid sequence, 1069 residues long: Thyrotropin-releasing hormone-degrading ectoenzyme (1069 aa).

Acidic residues predominate over residues 1-11 (MALDGELGEQE). The interval 1–46 (MALDGELGEQEEEKKKKKKKKRKKKKEEEEEEEGAEKSSSPFAAAM) is disordered. The Cytoplasmic segment spans residues 1 to 85 (MALDGELGEQ…ERHIAVHKRL (85 aa)). The span at 15 to 25 (KKKKKKKRKKK) shows a compositional bias: basic residues. The helical; Signal-anchor for type II membrane protein transmembrane segment at 86-106 (VLAFAVSLVALLAVTMLAVLL) threads the bilayer. At 107 to 1069 (SLRFDECGAS…FQWLGKALRH (963 aa)) the chain is on the extracellular side. Positions 117–179 (ATPGADGGPS…PSEEEREPWE (63 aa)) are disordered. Gly residues predominate over residues 121-136 (ADGGPSGFPERGGNGS). N-linked (GlcNAc...) asparagine glycans are attached at residues N134, N205, N220, N267, and N383. A substrate-binding site is contributed by 449–453 (AAMEN). H485 lines the Zn(2+) pocket. E486 serves as the catalytic Proton acceptor. Zn(2+)-binding residues include H489 and E508. N650, N679, N694, N708, N729, N845, and N951 each carry an N-linked (GlcNAc...) asparagine glycan.

Belongs to the peptidase M1 family. As to quaternary structure, homodimer; disulfide-linked. It depends on Zn(2+) as a cofactor. Predominantly expressed in brain.

It is found in the membrane. The enzyme catalyses Release of the N-terminal pyroglutamyl group from pGlu-|-His-Xaa tripeptides and pGlu-|-His-Xaa-Gly tetrapeptides.. Functionally, specific inactivation of TRH after its release. In Homo sapiens (Human), this protein is Thyrotropin-releasing hormone-degrading ectoenzyme (TRHDE).